The chain runs to 1423 residues: MEEETVCKNWFMRKSGKSWIFGCAVFFVLGLATALPVAAEEISQTTAADTAVTEVRTEDSSQTSSQETAVTETTQSEGTASKQLTTPAVADQTTEPTDNEPISSSDGASSPYQVTDTTEPQQTLTPADSEPQAKADVQQAAAPKKEEINPVTNLEDMSHDTNGTWEVREDGIHSNAIGKGDSFLYSQSSGKNFVYATDVTFKQNSGAAALVFRSNNDSNNKNMYAVNVDIGGHKAKFWRWVDNKDIQLIDERDVVPTADNRYTLKVVAVNNWISYYVNDILMASTGDYVLQKADKGQNTVIPEGHFGLLNWNGDMVFQNTKFALLDDTTAPLIDNITVRSDRGNVEKQGQFFSEEPLHIQYVSNDASQVSLDIAKHNPAATVTVEDKTGRVYTDPSHLPVNVGANYFTVKSTVIDSFGRTVTLTYRINVHRRQNDEVYYNELYRDQYHYSVKDGWANDPNGLVYYNGVYHLFHQFYDDTKWGPMHWAHATSTDLIHWKEEPIAFYPDSNGYMFSGCVVVDEHNSSGLFKTAKGGLVAIITANGNGQRMELAYSEDEGKTWQKYDRIVADWSNDPLQNQDFRDPKVFHWNNQWFMVLAGGPLRIYSSNNLKDWKVESTYPDLHTECPDMYPIVANDGVLKWVLSRGGRFYKVGDFKQVDGKWTFIADDAYKDKDQVMNFGKDSYAAMTYYVHDFGTETRPTIPKLTEVNWMNTWEDYCNLVADTVGQDFNGTFNLNLDLGLINENGQYILTQTPVKAYDSLRDVNTALHFKDVTVDANNTLLKDFKGDSYEIVSHFRPDEKTTKVGFNLRVGNGQATKVIYDLQTETLSIDRSQSGTILSAAFAKVNSQHVTKNADGSIDLHIYVDRASVEVFSKNNTVAGANQIFPNPEAVGASIIVEGGKAQADISVYQMKTIWTDKKDTAKPVAMNTTTAKELALQVGQSQDLQVYLAPASVRQDVEWTISDPSLVRTSQKGNVLHLTAVKKGKLTITAISKENPSLSKTFTISITLNNFKTNLKGLQSVTGKWYVDDETLYDSNTSSNDYYMASQKPGFKEYDYDIDLKYQRGLINLFVASGNIDPSQAYSVQFGDSETVRLYRFAGDTIAEANMGKRINDDQYHHIKVTKTKNSIIISVDGQEVMSHNFDQVDSYFNDAYVGLGLWDGAVEFQNFFVTDHATTPKPDSDPTPQPDAPEALAQERELIDPATGVRVILQKGELASIVRVKVSHIETNDAHTPAVLNAKDYDLFNITPIDKNEKVVAITKPATVLLPIDAGKVVDKVVYLPNTDKEENLPFTIVSLTDSNGKKQSYVRFTAEHFSEYGLVYQAENQTNLKSKEKQDNVAISYPLNLEQEVKVSSISRKYAANKTADVNSVQQTEPSVMSSSPKATLPDTGDHKTDLSQLGVLAMIGSFLVEIAGYFKKRKD.

The N-terminal stretch at 1 to 39 (MEEETVCKNWFMRKSGKSWIFGCAVFFVLGLATALPVAA) is a signal peptide. Residues 44–161 (QTTAADTAVT…TNLEDMSHDT (118 aa)) are disordered. A compositionally biased stretch (polar residues) spans 69-126 (AVTETTQSEGTASKQLTTPAVADQTTEPTDNEPISSSDGASSPYQVTDTTEPQQTLTP). Substrate-binding positions include 455–458 (WAND), Q474, 513–514 (FS), 581–582 (RD), and D783. D458 is an active-site residue. The tract at residues 867 to 871 (ASVEV) is involved in binding of sugars with beta-(2,6) linkages or binding of molecular weight fructans. Residues 924–1002 (PVAMNTTTAK…SKENPSLSKT (79 aa)) enclose the BIG2 domain. The segment covering 1368–1385 (DVNSVQQTEPSVMSSSPK) has biased composition (polar residues). Residues 1368 to 1394 (DVNSVQQTEPSVMSSSPKATLPDTGDH) form a disordered region. The short motif at 1388–1392 (LPDTG) is the LPXTG sorting signal element. T1391 is subject to Pentaglycyl murein peptidoglycan amidated threonine. The propeptide at 1392 to 1423 (GDHKTDLSQLGVLAMIGSFLVEIAGYFKKRKD) is removed by sortase.

The protein belongs to the glycosyl hydrolase 32 family.

The protein resides in the secreted. Its subcellular location is the cell wall. It carries out the reaction Hydrolysis of terminal, non-reducing (2-&gt;1)- and (2-&gt;6)-linked beta-D-fructofuranose residues in fructans.. In terms of biological role, this protein is a fructanase enzyme which degrades levans and inulins to fructose and also cleaves sucrose into glucose and fructose and can therefore function as an extracellular invertase. In Streptococcus mutans serotype c (strain ATCC 700610 / UA159), this protein is Fructan beta-fructosidase (fruA).